A 138-amino-acid chain; its full sequence is Transcription factor Atoh7-a (138 aa).

The bHLH domain maps to Lys-33–Leu-85.

The protein resides in the nucleus. The protein localises to the perikaryon. Its subcellular location is the cell projection. It is found in the axon. Functionally, transcription factor that binds to DNA at the consensus sequence 5'-CAG[GC]TG-3'. Positively regulates the determination of retinal ganglion cell fate and formation of the optic nerve and retino-hypothalamic tract. Required for retinal circadian rhythm photoentrainment. Plays a role in brainstem auditory signaling and binaural processing. Regulates the differentiation of olfactory receptor neurons. During retinal neurogenesis, activates the transcription of several genes such as brn3d, coe3, cbfa2t2, glis2, elrC and xgadd45-gamma. The polypeptide is Transcription factor Atoh7-a (Xenopus laevis (African clawed frog)).